Reading from the N-terminus, the 397-residue chain is Acetate kinase 1 (397 aa).

Mg(2+) is bound at residue N8. An ATP-binding site is contributed by K15. R89 is a binding site for substrate. The active-site Proton donor/acceptor is the D146. Residues 206–210 (HLGNG), 281–283 (DLR), and 329–333 (GIGEN) contribute to the ATP site. Residue E382 participates in Mg(2+) binding.

This sequence belongs to the acetokinase family. In terms of assembly, homodimer. It depends on Mg(2+) as a cofactor. Requires Mn(2+) as cofactor.

The protein resides in the cytoplasm. It carries out the reaction acetate + ATP = acetyl phosphate + ADP. The protein operates within metabolic intermediate biosynthesis; acetyl-CoA biosynthesis; acetyl-CoA from acetate: step 1/2. In terms of biological role, catalyzes the formation of acetyl phosphate from acetate and ATP. Can also catalyze the reverse reaction. The sequence is that of Acetate kinase 1 from Listeria monocytogenes serovar 1/2a (strain ATCC BAA-679 / EGD-e).